A 226-amino-acid polypeptide reads, in one-letter code: UPF0758 protein SPT_1135 (226 aa).

One can recognise an MPN domain in the interval 103–225 (SILSSQKLAK…YFSYREKTDL (123 aa)). Zn(2+) contacts are provided by His174, His176, and Asp187. Residues 174–187 (HNHPSGAVAPSQND) carry the JAMM motif motif.

Belongs to the UPF0758 family.

The sequence is that of UPF0758 protein SPT_1135 from Streptococcus pneumoniae (strain Taiwan19F-14).